A 471-amino-acid polypeptide reads, in one-letter code: FERM domain-containing protein 8 (471 aa).

3 disordered regions span residues 1–23 (MEGD…RGSV), 381–416 (AATG…RRQN), and 451–471 (TRQA…LEQG). Residues 31-382 (QDLLVYLAND…ELRSVSESAA (352 aa)) form the FERM domain.

Its subcellular location is the cytoplasm. The protein resides in the cytosol. It localises to the cell membrane. In terms of biological role, promotes the cell surface stability of rhomboid 5 homologs and prevents their degradation via the endolysosomal pathway. By acting on rhomboid 5 homologs, involved in ADAM17-mediated ligand shedding. Negatively regulates the Wnt/beta-catenin signaling pathway. In Danio rerio (Zebrafish), this protein is FERM domain-containing protein 8 (frmd8).